Reading from the N-terminus, the 190-residue chain is MSVSNVFFVGLMGAGKTTVGRAVARRLDLPFFDSDHEIEARCGVRVPVIFEHEGEMGFRDRETQMIDELTARHGVVVATGGGAVLRPENRAFLRERGTVIYLRANPHDLYLRTRHDKNRPLLQTENPRARLEELHAIRDPLYREVAHFVIETGKPTVAQLVNMVLMQLEVAGIVVPPAASSPTSQVSRQS.

Glycine 13 to threonine 18 lines the ATP pocket. Threonine 17 provides a ligand contact to Mg(2+). Substrate-binding residues include aspartate 35, arginine 59, and glycine 81. Arginine 119 is a binding site for ATP. Arginine 138 is a binding site for substrate.

Belongs to the shikimate kinase family. Monomer. Requires Mg(2+) as cofactor.

It is found in the cytoplasm. It catalyses the reaction shikimate + ATP = 3-phosphoshikimate + ADP + H(+). It participates in metabolic intermediate biosynthesis; chorismate biosynthesis; chorismate from D-erythrose 4-phosphate and phosphoenolpyruvate: step 5/7. Its function is as follows. Catalyzes the specific phosphorylation of the 3-hydroxyl group of shikimic acid using ATP as a cosubstrate. This Ralstonia nicotianae (strain ATCC BAA-1114 / GMI1000) (Ralstonia solanacearum) protein is Shikimate kinase.